Here is a 288-residue protein sequence, read N- to C-terminus: MKGIYSALLVSFDKDGNINEKGLREIIRHNIDVCKIDGLYVGGSTGENFMLSTDEKKRIFEIAMDEAKGQVKLIAQVGSVNLKEAVELAKFTTDLGYDAISAVTPFYYKFDFNEIKHYYETIINSVDNKLIIYSIPFLTGVNMSIEQFAELFENDKIIGVKFTAADFYLLERMRKAFPDKLIFAGFDEMMLPATVLGVDGAIGSTFNVNGIRARQIFEAAQKGDIETALEVQHVTNDLITDILNNGLYQTIKLILQEQGVDAGYCRQPMKEATEEMIEKAKEINKKYF.

Aceneuramate contacts are provided by serine 44 and threonine 45. The active-site Proton donor is tyrosine 133. The active-site Schiff-base intermediate with substrate is lysine 161. 5 residues coordinate aceneuramate: threonine 163, glycine 185, aspartate 187, glutamate 188, and serine 204.

The protein belongs to the DapA family. NanA subfamily. In terms of assembly, homotetramer.

Its subcellular location is the cytoplasm. The catalysed reaction is aceneuramate = aldehydo-N-acetyl-D-mannosamine + pyruvate. The protein operates within amino-sugar metabolism; N-acetylneuraminate degradation; D-fructose 6-phosphate from N-acetylneuraminate: step 1/5. In terms of biological role, catalyzes the reversible aldol cleavage of N-acetylneuraminic acid (sialic acid; Neu5Ac) to form pyruvate and N-acetylmannosamine (ManNAc) via a Schiff base intermediate. The chain is N-acetylneuraminate lyase from Clostridium perfringens (strain SM101 / Type A).